A 243-amino-acid chain; its full sequence is Cell division protein ZipA (243 aa).

The Periplasmic segment spans residues 1-4 (MSDM). A helical membrane pass occupies residues 5 to 25 (AMIRIGILIAGLLLVAAIFLF). Residues 26–243 (GRPKKSPQGR…APPLTKSPRW (218 aa)) are Cytoplasmic-facing. Positions 30 to 89 (KSPQGRRVDKDEGQPRERREPVISSEFGVEDDAAERAEGVEQSELNLEGQDASGGNEVGK) are disordered. Positions 35–50 (RRVDKDEGQPRERREP) are enriched in basic and acidic residues.

This sequence belongs to the ZipA family. In terms of assembly, interacts with FtsZ via their C-terminal domains.

It localises to the cell inner membrane. Essential cell division protein that stabilizes the FtsZ protofilaments by cross-linking them and that serves as a cytoplasmic membrane anchor for the Z ring. Also required for the recruitment to the septal ring of downstream cell division proteins. This is Cell division protein ZipA from Xanthomonas euvesicatoria pv. vesicatoria (strain 85-10) (Xanthomonas campestris pv. vesicatoria).